The primary structure comprises 506 residues: Cytochrome P450 monooxygenase BOA3 (506 aa).

Residues 15 to 35 (IYLWIGFVLVVLLAYPTYFAI) form a helical membrane-spanning segment. Residue Cys-451 coordinates heme.

This sequence belongs to the cytochrome P450 family. Requires heme as cofactor.

It is found in the membrane. Its pathway is polyketide biosynthesis. Cytochrome P450 monooxygenase; part of the gene cluster A that mediates the biosynthesis of botcinic acid and its botcinin derivatives, acetate-derived polyketides that contribute to virulence when combined with the sesquiterpene botrydial. Botcinic acid and its derivatives have been shown to induce chlorosis and necrosis during host plant infection, but also have antifungal activities. Two polyketide synthases, BOA6 and BOA9, are involved in the biosynthesis of botcinins. BOA6 mediates the formation of the per-methylated tetraketide core by condensation of four units of malonyl-CoA with one unit of acetyl-CoA, which would be methylated in activated methylene groups to yield a bicyclic acid intermediate that could then either be converted to botrylactone derivatives or lose the starter acetate unit through a retro-Claisen type C-C bond cleavage to yield botcinin derivatives. The second polyketide synthase, BOA9, is probably required for the biosynthesis of the tetraketide side chain of botcinins. The methyltransferase (MT) domain within BOA6 is probably responsible for the incorporation of four methyl groups. The trans-enoyl reductase BOA5 might take over the enoyl reductase function of BOA6 that misses an ER domain. The monooxygenases BOA2, BOA3 and BOA4 might be involved in further hydroxylations at C4, C5 and C8, whereas BOA7, close to BOA9, could potentially be involved in the hydroxylation at C4 in the side chain of botcinins. This chain is Cytochrome P450 monooxygenase BOA3, found in Botryotinia fuckeliana (strain B05.10) (Noble rot fungus).